A 265-amino-acid polypeptide reads, in one-letter code: O-methyltransferase NEC2 (265 aa).

It belongs to the methyltransferase superfamily.

It catalyses the reaction desmethylnectriapyrone + S-adenosyl-L-methionine = nectriapyrone + S-adenosyl-L-homocysteine + H(+). In terms of biological role, O-methyltransferase; part of the gene cluster that mediates the biosynthesis of nectriapyrone and its analogs phomopyrone A, acropyrone and zaepyrone. The nectriapyrone biosynthetic gene cluster consists of two genes, the highly reducing polyketide synthase NEC1 that produces a demethylated analog of nectriapyrone from one unit of acetyl-CoA and one unit of malonyl-CoA; and the O-methyltransferase NEC2 that further methylates the NEC1 product to yield nectriapyrone. Nectriapyrone is further hydrolyzed to nectriapyrone D, also known as gulypyrone B, by an unidentified hydrolase localized outside the nectriapyrone cluster. This is O-methyltransferase NEC2 from Pyricularia oryzae (strain 70-15 / ATCC MYA-4617 / FGSC 8958) (Rice blast fungus).